A 601-amino-acid chain; its full sequence is Glutathione-regulated potassium-efflux system protein KefB (601 aa).

Helical transmembrane passes span 5-25, 29-49, 55-75, 87-107, 115-135, 152-172, 177-197, 207-227, 230-250, 261-281, 284-304, 326-346, and 356-376; these read DLLL…PLAA, IGAV…GLGF, EILH…GLEL, IFGV…GLLM, AAVI…LQLM, VLLF…LLAG, HFDW…LIGG, FIAA…LVLG, LFMD…GILL, IAID…VGMA, LGVL…LVAV, FAGV…TAAS, and ALLL…MKLI. An RCK N-terminal domain is found at 400–518; that stretch reads KPQVIVVGFG…QAGVTNFSRE (119 aa).

It belongs to the monovalent cation:proton antiporter 2 (CPA2) transporter (TC 2.A.37) family. KefB subfamily. Interacts with the regulatory subunit KefG.

The protein localises to the cell inner membrane. In terms of biological role, pore-forming subunit of a potassium efflux system that confers protection against electrophiles. Catalyzes K(+)/H(+) antiport. The protein is Glutathione-regulated potassium-efflux system protein KefB of Enterobacter sp. (strain 638).